A 330-amino-acid chain; its full sequence is Putative protein DDB_G0285185 (330 aa).

Residues 212–240 (NKLQNQVQSSPKLSSPITKNKEQIVSTTS) are disordered. Polar residues predominate over residues 214 to 240 (LQNQVQSSPKLSSPITKNKEQIVSTTS).

The chain is Putative protein DDB_G0285185 from Dictyostelium discoideum (Social amoeba).